A 169-amino-acid chain; its full sequence is uncharacterized protein (169 aa).

Residues 10–30 (YFVTILIIIIIILIVLLIVFL) form a helical membrane-spanning segment. Positions 98 to 123 (QSKPINKNNQQTKNTPTPLDDRPDLS) are disordered. Residues 100–115 (KPINKNNQQTKNTPTP) show a composition bias toward low complexity.

The protein resides in the membrane. This is an uncharacterized protein from Acanthamoeba polyphaga (Amoeba).